We begin with the raw amino-acid sequence, 199 residues long: Imidazoleglycerol-phosphate dehydratase (199 aa).

Belongs to the imidazoleglycerol-phosphate dehydratase family.

It localises to the cytoplasm. It catalyses the reaction D-erythro-1-(imidazol-4-yl)glycerol 3-phosphate = 3-(imidazol-4-yl)-2-oxopropyl phosphate + H2O. It functions in the pathway amino-acid biosynthesis; L-histidine biosynthesis; L-histidine from 5-phospho-alpha-D-ribose 1-diphosphate: step 6/9. This is Imidazoleglycerol-phosphate dehydratase from Kineococcus radiotolerans (strain ATCC BAA-149 / DSM 14245 / SRS30216).